We begin with the raw amino-acid sequence, 1031 residues long: MPPGRWHAAYPAQAQSSRERGRLQTVKKEEEDESYTPVQAARPQTLNRPGQELFRQLFRQLRYHESSGPLETLSRLRELCRWWLRPDVLSKAQILELLVLEQFLSILPGELRVWVQLHNPESGEEAVALLEELQRDLDGTSWRDPGPAQSPDVHWMGTGALRSAQIWSLASPLRSSSALGDHLEPPYEIEARDFLAGQSDTPAAQMPALFPREGCPGDQVTPTRSLTAQLQETMTFKDVEVTFSQDEWGWLDSAQRNLYRDVMLENYRNMASLVGPFTKPALISWLEAREPWGLNMQAAQPKGNPVAAPTGDDLQSKTNKFILNQEPLEEAETLAVSSGCPATSVSEGIGLRESFQQKSRQKDQCENPIQVRVKKEETNFSHRTGKDSEVSGSNSLDLKHVTYLRVSGRKESLKHGCGKHFRMSSHHYDYKKYGKGLRHMIGGFSLHQRIHSGLKGNKKDVCGKDFSLSSHHQRGQSLHTVGVSFKCSDCGRTFSHSSHLAYHQRLHTQEKAFKCRVCGKAFRWSSNCARHEKIHTGVKPYKCDLCEKAFRRLSAYRLHRETHAKKKFLELNQYRAALTYSSGFDHHLGDQSGEKLFDCSQCRKSFHCKSYVLEHQRIHTQEKPYKCTKCRKTFRWRSNFTRHMRLHEEEKFYKQDECREGFRQSPDCSQPQGAPAVEKTFLCQQCGKTFTRKKTLVDHQRIHTGEKPYQCSDCGKDFAYRSAFIVHKKKHAMKRKPEGGPSFSQDTVFQVPQSSHSKEEPYKCSQCGKAFRNHSFLLIHQRVHTGEKPYKCRECGKAFRWSSNLYRHQRIHSLQKQYDCHESEKTPNVEPKILTGEKRFWCQECGKTFTRKRTLLDHKGIHSGEKRYKCNLCGKSYDRNYRLVNHQRIHSTERPFKCQWCGKEFIGRHTLSSHQRKHTRAAQAERSPPARSSSQDTKLRLQKLKPSEEMPLEDCKEACSQSSRLTGLQDISIGKKCHKCSICGKTFNKSSQLISHKRFHTRERPFKCSKCGKTFRWSSNLARHMKNHIRD.

The tract at residues 1–43 (MPPGRWHAAYPAQAQSSRERGRLQTVKKEEEDESYTPVQAARP) is disordered. Residues 17 to 29 (SRERGRLQTVKKE) show a composition bias toward basic and acidic residues. Lys-28 is covalently cross-linked (Glycyl lysine isopeptide (Lys-Gly) (interchain with G-Cter in SUMO1)). In terms of domain architecture, SCAN box spans 55–137 (RQLFRQLRYH…ALLEELQRDL (83 aa)). The 71-residue stretch at 234 to 304 (MTFKDVEVTF…NMQAAQPKGN (71 aa)) folds into the KRAB domain. Residues Lys-317, Lys-374, Lys-375, and Lys-399 each participate in a glycyl lysine isopeptide (Lys-Gly) (interchain with G-Cter in SUMO2) cross-link. C2H2-type zinc fingers lie at residues 485–507 (FKCS…QRLH), 513–535 (FKCR…EKIH), and 541–563 (YKCD…RETH). Lys-567 participates in a covalent cross-link: Glycyl lysine isopeptide (Lys-Gly) (interchain with G-Cter in SUMO2). 2 consecutive C2H2-type zinc fingers follow at residues 597–619 (FDCS…QRIH) and 625–647 (YKCT…MRLH). Residue Lys-654 forms a Glycyl lysine isopeptide (Lys-Gly) (interchain with G-Cter in SUMO2) linkage. 2 consecutive C2H2-type zinc fingers follow at residues 681–703 (FLCQ…QRIH) and 709–731 (YQCS…KKKH). Residues Lys-736 and Lys-758 each participate in a glycyl lysine isopeptide (Lys-Gly) (interchain with G-Cter in SUMO2) cross-link. 5 consecutive C2H2-type zinc fingers follow at residues 762–784 (YKCS…QRVH), 790–812 (YKCR…QRIH), 840–862 (FWCQ…KGIH), 868–890 (YKCN…QRIH), and 896–918 (FKCQ…QRKH). Residues 911–939 (LSSHQRKHTRAAQAERSPPARSSSQDTKL) are disordered. Glycyl lysine isopeptide (Lys-Gly) (interchain with G-Cter in SUMO2) cross-links involve residues Lys-938, Lys-956, and Lys-975. C2H2-type zinc fingers lie at residues 978–1000 (HKCS…KRFH) and 1006–1028 (FKCS…MKNH).

Belongs to the krueppel C2H2-type zinc-finger protein family.

It is found in the nucleus. Transcription regulator required to maintain maternal and paternal gene imprinting, a process by which gene expression is restricted in a parent of origin-specific manner by epigenetic modification of genomic DNA and chromatin, including DNA methylation. Acts by controlling DNA methylation during the earliest multicellular stages of development at multiple imprinting control regions (ICRs). Acts together with ZFP57, but seems to be the major factor in human early embryonic imprinting maintenance. In contrast, in mice, ZFP57 plays the predominant role in imprinting maintenance. In Homo sapiens (Human), this protein is Zinc finger protein 445.